The chain runs to 378 residues: Gibberellin 20 oxidase 2 (378 aa).

Positions 1-10 (MAILCTTTSP) are enriched in polar residues. The tract at residues 1–26 (MAILCTTTSPAEKEHEPKQDLEKDQT) is disordered. Basic and acidic residues predominate over residues 11-25 (AEKEHEPKQDLEKDQ). The Fe2OG dioxygenase domain maps to 220–320 (ENDSIMRLNH…RKSMAFFLCP (101 aa)). Fe cation contacts are provided by H245, D247, and H301. The active site involves R311.

The protein belongs to the iron/ascorbate-dependent oxidoreductase family. GA20OX subfamily. The cofactor is Fe(2+). L-ascorbate serves as cofactor. As to expression, expressed in inflorescence and developing siliques. Detected in seeds, roots, cotyledons and leaves. In seeds, specifically detected at the rim of the embryo and the outer integument.

It catalyses the reaction gibberellin A12 + 2 2-oxoglutarate + 3 O2 + H(+) = gibberellin A9 + 2 succinate + 3 CO2 + 2 H2O. It carries out the reaction gibberellin A12 + 2-oxoglutarate + O2 = gibberellin A15 + succinate + CO2. The enzyme catalyses gibberellin A15 + 2-oxoglutarate + O2 = gibberellin A24 + succinate + CO2 + H2O. The catalysed reaction is gibberellin A53 + 2-oxoglutarate + O2 = gibberellin A44 + succinate + CO2. It catalyses the reaction gibberellin A12 + 3 2-oxoglutarate + 3 O2 = gibberellin A25 + 3 succinate + 3 CO2 + H2O + H(+). It participates in plant hormone biosynthesis; gibberellin biosynthesis. Its function is as follows. Key oxidase enzyme in the biosynthesis of gibberellin that catalyzes the conversion of GA12 to GA9, via a three-step oxidation at C-20 of the GA skeleton, and GA25 is also formed as a minor product. GA53 is less effectively oxidized than GA12 and is only oxidized one step to GA44. Involved in the promotion of the floral transition, fertility and silique elongation, but plays only a minor role in elongation of seedling organs. Acts redundantly with GA20OX1. The sequence is that of Gibberellin 20 oxidase 2 (GA20OX2) from Arabidopsis thaliana (Mouse-ear cress).